The chain runs to 454 residues: tRNA modification GTPase MnmE (454 aa).

Arg-26, Glu-84, and Lys-123 together coordinate (6S)-5-formyl-5,6,7,8-tetrahydrofolate. The region spanning 219–378 is the TrmE-type G domain; that stretch reads GLQVVIAGKP…LVDAITAHAG (160 aa). Asn-229 provides a ligand contact to K(+). GTP contacts are provided by residues 229 to 234, 248 to 254, and 273 to 276; these read NAGKSS, TDIAGTT, and DTAG. A Mg(2+)-binding site is contributed by Ser-233. K(+) is bound by residues Thr-248, Ile-250, and Thr-253. Thr-254 contributes to the Mg(2+) binding site. (6S)-5-formyl-5,6,7,8-tetrahydrofolate is bound at residue Lys-454.

This sequence belongs to the TRAFAC class TrmE-Era-EngA-EngB-Septin-like GTPase superfamily. TrmE GTPase family. Homodimer. Heterotetramer of two MnmE and two MnmG subunits. K(+) is required as a cofactor.

The protein localises to the cytoplasm. Exhibits a very high intrinsic GTPase hydrolysis rate. Involved in the addition of a carboxymethylaminomethyl (cmnm) group at the wobble position (U34) of certain tRNAs, forming tRNA-cmnm(5)s(2)U34. The chain is tRNA modification GTPase MnmE from Acinetobacter baumannii (strain ATCC 17978 / DSM 105126 / CIP 53.77 / LMG 1025 / NCDC KC755 / 5377).